A 209-amino-acid chain; its full sequence is 3-dehydroquinate dehydratase (209 aa).

3-dehydroquinate contacts are provided by residues Ser-6, 25–27, and Arg-55; that span reads ELR. His-109 functions as the Proton donor/acceptor in the catalytic mechanism. Lys-134 (schiff-base intermediate with substrate) is an active-site residue. Residues Arg-172 and Gln-195 each contribute to the 3-dehydroquinate site.

The protein belongs to the type-I 3-dehydroquinase family. Homodimer.

The enzyme catalyses 3-dehydroquinate = 3-dehydroshikimate + H2O. It functions in the pathway metabolic intermediate biosynthesis; chorismate biosynthesis; chorismate from D-erythrose 4-phosphate and phosphoenolpyruvate: step 3/7. In terms of biological role, involved in the third step of the chorismate pathway, which leads to the biosynthesis of aromatic amino acids. Catalyzes the cis-dehydration of 3-dehydroquinate (DHQ) and introduces the first double bond of the aromatic ring to yield 3-dehydroshikimate. This is 3-dehydroquinate dehydratase from Methanoregula boonei (strain DSM 21154 / JCM 14090 / 6A8).